The sequence spans 83 residues: Protein WFDC9 (83 aa).

Positions 1-24 (MKPWIIVLTVSAHGILVFLHVLGS) are cleaved as a signal peptide.

Its subcellular location is the secreted. This is Protein WFDC9 (Wfdc9) from Mus musculus (Mouse).